Consider the following 62-residue polypeptide: MYKFEVFKDKAGEFRFRFRASNGEIMFSSEGYKAKASVLNAIESIKKNSPGAETVDQTTATV.

The protein belongs to the UPF0339 family.

This Agrobacterium fabrum (strain C58 / ATCC 33970) (Agrobacterium tumefaciens (strain C58)) protein is UPF0339 protein Atu5359.